The following is a 317-amino-acid chain: Beta-ketoacyl-[acyl-carrier-protein] synthase III (317 aa).

Active-site residues include Cys-112 and His-244. The interval 245-249 (QANLR) is ACP-binding. Residue Asn-274 is part of the active site.

It belongs to the thiolase-like superfamily. FabH family. Homodimer.

The protein localises to the cytoplasm. It catalyses the reaction malonyl-[ACP] + acetyl-CoA + H(+) = 3-oxobutanoyl-[ACP] + CO2 + CoA. It functions in the pathway lipid metabolism; fatty acid biosynthesis. Functionally, catalyzes the condensation reaction of fatty acid synthesis by the addition to an acyl acceptor of two carbons from malonyl-ACP. Catalyzes the first condensation reaction which initiates fatty acid synthesis and may therefore play a role in governing the total rate of fatty acid production. Possesses both acetoacetyl-ACP synthase and acetyl transacylase activities. Its substrate specificity determines the biosynthesis of branched-chain and/or straight-chain of fatty acids. This Blochmanniella pennsylvanica (strain BPEN) protein is Beta-ketoacyl-[acyl-carrier-protein] synthase III.